Consider the following 107-residue polypeptide: Homeobox protein HD-3 (107 aa).

A DNA-binding region (homeobox) is located at residues 6–65 (SKAPRTRMTAGQTRVLMSFFKDNPFPSTTAREKLSKVLGVGPRTVQIWFQNQRQKARGQA).

Its subcellular location is the nucleus. This Encephalitozoon cuniculi (strain GB-M1) (Microsporidian parasite) protein is Homeobox protein HD-3 (HD-3).